Consider the following 161-residue polypeptide: Small heat shock protein hspJ (161 aa).

The sHSP domain occupies S52–E161.

It belongs to the small heat shock protein (HSP20) family.

This chain is Small heat shock protein hspJ (hspJ), found in Dictyostelium discoideum (Social amoeba).